The sequence spans 370 residues: Aminomethyltransferase (370 aa).

Belongs to the GcvT family. As to quaternary structure, the glycine cleavage system is composed of four proteins: P, T, L and H.

The catalysed reaction is N(6)-[(R)-S(8)-aminomethyldihydrolipoyl]-L-lysyl-[protein] + (6S)-5,6,7,8-tetrahydrofolate = N(6)-[(R)-dihydrolipoyl]-L-lysyl-[protein] + (6R)-5,10-methylene-5,6,7,8-tetrahydrofolate + NH4(+). The glycine cleavage system catalyzes the degradation of glycine. This chain is Aminomethyltransferase, found in Clostridium botulinum (strain Langeland / NCTC 10281 / Type F).